Here is a 492-residue protein sequence, read N- to C-terminus: MQNAPMTALLPDALVMAAIVVAWLIDTFVGPNSRRTTYFIALLSTVVAGIWFAIDALTPGAGPQYFFSRMYVVDPFASVMKAVVSLGYAVSIVYSRKYLEDRGLYEGNFFLLGMFSLLGQLVMISGNNFLTLYLGLELMSLSLYAAIALRRENAPSTEAAMKYYVLGALASGFLLYGISMLYGATGSLELNEVLKAVASGRINDVVLLFGVIFIVAGVAFKMGAVPFHMWVPDVYQGAPTAMTLIVGGGPKVAAFAWGLRFLVMGLLPLAVDWQEMLVILAALSLIVGNITGIVQRNVKRMLAYSAISNMGFVLLGLLAGVVDGKTGAAASAYGSAMFYSIVYLITTLGSFGVVMLLARREFEAETLDDFKGLNQRSPVFAFVMMVMMFSLAGIPPAVGFYAKLAVLEATMNAGLTWLAVLAVITSLFGAFYYLRIVKLMYFDDPVDTTPIVGDACKRTLLALNGVAVLVLGIVPGPLMSICLNAISHTLPL.

14 helical membrane passes run 5–25, 37–57, 72–92, 104–124, 129–149, 164–184, 205–225, 239–259, 276–295, 302–322, 337–357, 380–400, 414–434, and 466–486; these read PMTA…AWLI, TYFI…IDAL, VVDP…AVSI, LYEG…LVMI, FLTL…AIAL, YVLG…LYGA, VVLL…MGAV, PTAM…AWGL, MLVI…GIVQ, LAYS…AGVV, MFYS…VMLL, FAFV…AVGF, GLTW…FYYL, and VAVL…LNAI.

This sequence belongs to the complex I subunit 2 family. In terms of assembly, NDH-1 is composed of 14 different subunits. Subunits NuoA, H, J, K, L, M, N constitute the membrane sector of the complex.

It is found in the cell inner membrane. It catalyses the reaction a quinone + NADH + 5 H(+)(in) = a quinol + NAD(+) + 4 H(+)(out). In terms of biological role, NDH-1 shuttles electrons from NADH, via FMN and iron-sulfur (Fe-S) centers, to quinones in the respiratory chain. The immediate electron acceptor for the enzyme in this species is believed to be ubiquinone. Couples the redox reaction to proton translocation (for every two electrons transferred, four hydrogen ions are translocated across the cytoplasmic membrane), and thus conserves the redox energy in a proton gradient. The protein is NADH-quinone oxidoreductase subunit N of Paraburkholderia phymatum (strain DSM 17167 / CIP 108236 / LMG 21445 / STM815) (Burkholderia phymatum).